A 154-amino-acid chain; its full sequence is Ribosome maturation factor RimP (154 aa).

The protein belongs to the RimP family.

It localises to the cytoplasm. Required for maturation of 30S ribosomal subunits. In Cyanothece sp. (strain PCC 7425 / ATCC 29141), this protein is Ribosome maturation factor RimP.